Reading from the N-terminus, the 97-residue chain is Putative membrane protein insertion efficiency factor (97 aa).

Belongs to the UPF0161 family.

The protein localises to the cell membrane. Could be involved in insertion of integral membrane proteins into the membrane. The protein is Putative membrane protein insertion efficiency factor of Lactobacillus johnsonii (strain CNCM I-12250 / La1 / NCC 533).